The primary structure comprises 303 residues: MATH domain and coiled-coil domain-containing protein At3g58250 (303 aa).

The MATH domain occupies 8 to 135; that stretch reads KKKFSWVIKN…KGELKIVVEI (128 aa). A coiled-coil region spans residues 231-287; that stretch reads KLDWLKKKLDQVTQKKEKEAAGETRMHEIGEELKDLKLKCSDLEAQLDKEKADVLAA.

This is MATH domain and coiled-coil domain-containing protein At3g58250 from Arabidopsis thaliana (Mouse-ear cress).